We begin with the raw amino-acid sequence, 353 residues long: UPF0283 membrane protein YcjF (353 aa).

The segment covering 1 to 19 (MSEPLKPRIDFAEPLKEEP) has biased composition (basic and acidic residues). A disordered region spans residues 1–35 (MSEPLKPRIDFAEPLKEEPTSAFKAQQTFSEAESR). Helical transmembrane passes span 70–90 (MVMGGLALFGASVVGQGVQWT), 100–120 (VALGGCAAGALIVGAGVGSVV), and 213–233 (ESTLMIAVSPLALVDMAFIAW).

This sequence belongs to the UPF0283 family.

Its subcellular location is the cell inner membrane. This chain is UPF0283 membrane protein YcjF, found in Salmonella paratyphi A (strain AKU_12601).